We begin with the raw amino-acid sequence, 268 residues long: Putative F-box protein At3g23420 (268 aa).

Positions 5–51 (PRDLSDLPRNMAEEVLSRVPMTSLRRLRFTCKKWNTLSRCRSFAKKH) constitute an F-box domain.

This chain is Putative F-box protein At3g23420, found in Arabidopsis thaliana (Mouse-ear cress).